Consider the following 426-residue polypeptide: Zinc finger CCCH domain-containing protein 13 (426 aa).

The C3H1-type zinc finger occupies 10–36 (AYKTKLCALWQRGNCNRDTCSFAHGHG). 3 disordered regions span residues 34 to 155 (GHGD…HEKQ), 253 to 317 (NEEG…DKTS), and 390 to 426 (NDAD…VDVE). 3 stretches are compositionally biased toward basic and acidic residues: residues 54 to 70 (RRDY…DRRF), 78 to 101 (PGRE…RDSS), and 108 to 120 (RKSE…KTDD). Low complexity predominate over residues 124–133 (NSSRSLSLSD). The segment covering 135-155 (NDEKKKDKFSSGDEKEDHEKQ) has biased composition (basic and acidic residues). Positions 144–245 (SSGDEKEDHE…FERLGDLLAS (102 aa)) form a coiled coil. The span at 255–272 (EGSSVNEDLNERSPNTAA) shows a compositional bias: polar residues. The segment covering 284 to 317 (EEAKAVKKRRERDSDTMTRSDKYRSDVTDFDKTS) has biased composition (basic and acidic residues). Over residues 416–426 (YEGDDEEVDVE) the composition is skewed to acidic residues.

In Oryza sativa subsp. japonica (Rice), this protein is Zinc finger CCCH domain-containing protein 13.